Here is a 206-residue protein sequence, read N- to C-terminus: Small ribosomal subunit protein uS4 (206 aa).

Positions 96–156 (SRLDNVVYRM…EKSKNQLRIQ (61 aa)) constitute an S4 RNA-binding domain.

Belongs to the universal ribosomal protein uS4 family. In terms of assembly, part of the 30S ribosomal subunit. Contacts protein S5. The interaction surface between S4 and S5 is involved in control of translational fidelity.

In terms of biological role, one of the primary rRNA binding proteins, it binds directly to 16S rRNA where it nucleates assembly of the body of the 30S subunit. Its function is as follows. With S5 and S12 plays an important role in translational accuracy. This is Small ribosomal subunit protein uS4 from Teredinibacter turnerae (strain ATCC 39867 / T7901).